Here is a 180-residue protein sequence, read N- to C-terminus: Ribosome maturation factor RimM (180 aa).

Residues 104-177 (PEEFHDHQLV…RVVVDPPGGL (74 aa)) form the PRC barrel domain.

This sequence belongs to the RimM family. Binds ribosomal protein uS19.

The protein localises to the cytoplasm. An accessory protein needed during the final step in the assembly of 30S ribosomal subunit, possibly for assembly of the head region. Essential for efficient processing of 16S rRNA. May be needed both before and after RbfA during the maturation of 16S rRNA. It has affinity for free ribosomal 30S subunits but not for 70S ribosomes. This is Ribosome maturation factor RimM from Salinispora arenicola (strain CNS-205).